A 398-amino-acid polypeptide reads, in one-letter code: Deoxyguanosinetriphosphate triphosphohydrolase-like protein (398 aa).

One can recognise an HD domain in the interval 68–215 (RLTHTLEVAQ…AAISDDIAYD (148 aa)).

This sequence belongs to the dGTPase family. Type 2 subfamily.

In Azorhizobium caulinodans (strain ATCC 43989 / DSM 5975 / JCM 20966 / LMG 6465 / NBRC 14845 / NCIMB 13405 / ORS 571), this protein is Deoxyguanosinetriphosphate triphosphohydrolase-like protein.